Here is a 533-residue protein sequence, read N- to C-terminus: Glucomannan 4-beta-mannosyltransferase 9 (533 aa).

The chain crosses the membrane as a helical span at residues Ile-37–Val-57. Residue Asp-136 is part of the active site. Positions 195 and 197 each coordinate substrate. Asp-289 is a catalytic residue. 4 consecutive transmembrane segments (helical) span residues Leu-368 to Val-388, Val-404 to Phe-426, Val-483 to Gly-503, and Tyr-510 to Val-530.

This sequence belongs to the glycosyltransferase 2 family. Plant cellulose synthase-like A subfamily. In terms of tissue distribution, expressed in cotyledons at the base of the hypocotyls, in root elongation zone, lateral root primordia, vascular system of young leaves, abscission zone of the pedicle,.

It is found in the golgi apparatus membrane. It catalyses the reaction GDP-mannose + (glucomannan)n = GDP + (glucomannan)n+1.. Possesses glucomannan synthase and mannan synthase activities in vitro. Mannan synthase consists of a 4-beta-mannosyltransferase activity on mannan using GDP-mannose. The beta-1,4-mannan product is the backbone for galactomannan synthesis by galactomannan galactosyltransferase. Galactomannan is a noncellulosic polysaccharides of plant cell wall. Required for lateral root development. This is Glucomannan 4-beta-mannosyltransferase 9 from Arabidopsis thaliana (Mouse-ear cress).